A 408-amino-acid chain; its full sequence is Peptidase T (408 aa).

Zn(2+) is bound at residue H78. D80 is an active-site residue. D141 lines the Zn(2+) pocket. E175 functions as the Proton acceptor in the catalytic mechanism. The Zn(2+) site is built by E176, D198, and H380.

The protein belongs to the peptidase M20B family. Zn(2+) is required as a cofactor.

It is found in the cytoplasm. It catalyses the reaction Release of the N-terminal residue from a tripeptide.. Cleaves the N-terminal amino acid of tripeptides. The chain is Peptidase T from Clostridium botulinum (strain Okra / Type B1).